A 205-amino-acid chain; its full sequence is ITG-like peptide (205 aa).

A signal peptide spans 1–15; that stretch reads MRVYAAITLVLVANT. Propeptides lie at residues 16–188 and 202–205; these read AYIG…TSGE and MPFA.

Expressed throughout the nervous system (at protein level).

It is found in the secreted. In Camponotus floridanus (Florida carpenter ant), this protein is ITG-like peptide.